The primary structure comprises 111 residues: T cell receptor beta variable 20-1 (111 aa).

A signal peptide spans 1-15; that stretch reads MLLLLLLLGPGSGLG. The Ig-like domain occupies 16 to 111; it reads AVVSQHPSRV…DSSFYICSAR (96 aa). Cys37 and Cys108 are disulfide-bonded.

As to quaternary structure, alpha-beta TR is a heterodimer composed of an alpha and beta chain; disulfide-linked. The alpha-beta TR is associated with the transmembrane signaling CD3 coreceptor proteins to form the TR-CD3 (TcR or TCR). The assembly of alpha-beta TR heterodimers with CD3 occurs in the endoplasmic reticulum where a single alpha-beta TR heterodimer associates with one CD3D-CD3E heterodimer, one CD3G-CD3E heterodimer and one CD247 homodimer forming a stable octameric structure. CD3D-CD3E and CD3G-CD3E heterodimers preferentially associate with TR alpha and TR beta chains, respectively. The association of the CD247 homodimer is the last step of TcR assembly in the endoplasmic reticulum and is required for transport to the cell surface.

Its subcellular location is the cell membrane. Its function is as follows. V region of the variable domain of T cell receptor (TR) beta chain that participates in the antigen recognition. Alpha-beta T cell receptors are antigen specific receptors which are essential to the immune response and are present on the cell surface of T lymphocytes. Recognize peptide-major histocompatibility (MH) (pMH) complexes that are displayed by antigen presenting cells (APC), a prerequisite for efficient T cell adaptive immunity against pathogens. Binding of alpha-beta TR to pMH complex initiates TR-CD3 clustering on the cell surface and intracellular activation of LCK that phosphorylates the ITAM motifs of CD3G, CD3D, CD3E and CD247 enabling the recruitment of ZAP70. In turn ZAP70 phosphorylates LAT, which recruits numerous signaling molecules to form the LAT signalosome. The LAT signalosome propagates signal branching to three major signaling pathways, the calcium, the mitogen-activated protein kinase (MAPK) kinase and the nuclear factor NF-kappa-B (NF-kB) pathways, leading to the mobilization of transcription factors that are critical for gene expression and essential for T cell growth and differentiation. The T cell repertoire is generated in the thymus, by V-(D)-J rearrangement. This repertoire is then shaped by intrathymic selection events to generate a peripheral T cell pool of self-MH restricted, non-autoaggressive T cells. Post-thymic interaction of alpha-beta TR with the pMH complexes shapes TR structural and functional avidity. The chain is T cell receptor beta variable 20-1 from Homo sapiens (Human).